A 497-amino-acid polypeptide reads, in one-letter code: ADP-dependent glucokinase (497 aa).

A signal peptide spans 1 to 22 (MALWRGSAYAGFLALAVGCVFL). One can recognise an ADPK domain in the interval 52–497 (SPEGRLAAAW…LFYSEVHPHY (446 aa)). Mg(2+) contacts are provided by Glu297, Glu328, and Asp481. Catalysis depends on Asp481, which acts as the Proton acceptor.

It belongs to the ADP-dependent glucokinase family. In terms of assembly, monomer. Mg(2+) is required as a cofactor.

It localises to the secreted. It carries out the reaction D-glucose + ADP = D-glucose 6-phosphate + AMP + H(+). Its pathway is carbohydrate degradation; glycolysis. Catalyzes the phosphorylation of D-glucose to D-glucose 6-phosphate using ADP as the phosphate donor. GDP and CDP can replace ADP, but with reduced efficiency. The chain is ADP-dependent glucokinase (ADPGK) from Homo sapiens (Human).